Here is a 139-residue protein sequence, read N- to C-terminus: Large ribosomal subunit protein uL16 (139 aa).

The span at 1 to 17 (MLMPKRVKYRKSQRGRM) shows a compositional bias: basic residues. Residues 1–24 (MLMPKRVKYRKSQRGRMKGNSGRG) are disordered.

This sequence belongs to the universal ribosomal protein uL16 family. Part of the 50S ribosomal subunit.

Binds 23S rRNA and is also seen to make contacts with the A and possibly P site tRNAs. In Chlorobium limicola (strain DSM 245 / NBRC 103803 / 6330), this protein is Large ribosomal subunit protein uL16.